Reading from the N-terminus, the 44-residue chain is Antimicrobial peptide 2 (44 aa).

In terms of processing, disulfide bonds. Expressed in flowers but not in leaves, seeds or roots (at protein level).

In terms of biological role, antimicrobial peptide. Active against fungal species B.cinerea (IC(50)=5.2 uM), A.niger (IC(50)=2.6 uM) and B.sorokinina (IC(50)=5.2 uM) but not against F.oxysporum, F.graminearum and P.debaryanum at concentrations below 10 uM. Inhibits growth of P.infestans at concentration between 1.3 uM and 5.2 uM. Active against bacterial species P.syringae, B.subtilis, X.campestris and C.michiganense. This Taraxacum officinale (Common dandelion) protein is Antimicrobial peptide 2.